The chain runs to 385 residues: Probable tRNA sulfurtransferase (385 aa).

In terms of domain architecture, THUMP spans A65–R165. ATP is bound by residues L183–L184, T208–F209, R267, G285, and Q294.

The protein belongs to the ThiI family.

The protein localises to the cytoplasm. It catalyses the reaction [ThiI sulfur-carrier protein]-S-sulfanyl-L-cysteine + a uridine in tRNA + 2 reduced [2Fe-2S]-[ferredoxin] + ATP + H(+) = [ThiI sulfur-carrier protein]-L-cysteine + a 4-thiouridine in tRNA + 2 oxidized [2Fe-2S]-[ferredoxin] + AMP + diphosphate. The catalysed reaction is [ThiS sulfur-carrier protein]-C-terminal Gly-Gly-AMP + S-sulfanyl-L-cysteinyl-[cysteine desulfurase] + AH2 = [ThiS sulfur-carrier protein]-C-terminal-Gly-aminoethanethioate + L-cysteinyl-[cysteine desulfurase] + A + AMP + 2 H(+). The protein operates within cofactor biosynthesis; thiamine diphosphate biosynthesis. Its function is as follows. Catalyzes the ATP-dependent transfer of a sulfur to tRNA to produce 4-thiouridine in position 8 of tRNAs, which functions as a near-UV photosensor. Also catalyzes the transfer of sulfur to the sulfur carrier protein ThiS, forming ThiS-thiocarboxylate. This is a step in the synthesis of thiazole, in the thiamine biosynthesis pathway. The sulfur is donated as persulfide by IscS. This Mycoplasma genitalium (strain ATCC 33530 / DSM 19775 / NCTC 10195 / G37) (Mycoplasmoides genitalium) protein is Probable tRNA sulfurtransferase.